A 318-amino-acid chain; its full sequence is MSVVVYAPASIGNVSVGFDVLGAAVSPIDGTLLGDRVKVEAGAEAFTLKTAGRFVDKLPANPQENIVYDCWQVFARELEKKSVVLKPLTMTLEKNMPIGSGLGSSACSIVAALDALNQFHASPLDETELLALMGEMEGKISGSIHYDNVAPCYLGGVQLMLEELGIISQSVPSFDDWYWVMAYPGIKVSTAEARAILPAQYRRQDIVAHGRYLAGFIHACHTQQPELAAKMIKDVIAEPYREKLLPGFAKARNYAASAGALATGISGSGPTLFSVCKEQAVAERVARWLEQNYVQNEEGFVHICRLDKQGSKVTGSEL.

An ATP-binding site is contributed by 97–107; that stretch reads PIGSGLGSSAC.

The protein belongs to the GHMP kinase family. Homoserine kinase subfamily.

Its subcellular location is the cytoplasm. The enzyme catalyses L-homoserine + ATP = O-phospho-L-homoserine + ADP + H(+). Its pathway is amino-acid biosynthesis; L-threonine biosynthesis; L-threonine from L-aspartate: step 4/5. Catalyzes the ATP-dependent phosphorylation of L-homoserine to L-homoserine phosphate. The chain is Homoserine kinase from Vibrio cholerae serotype O1 (strain M66-2).